We begin with the raw amino-acid sequence, 387 residues long: MANDFLFTSESVSEGHPDKVADQISDAVLDAILAQDKYARVAAETLCNTGLVVLAGEITTTANVDYIQIARDTIKRIGYDNTDYGIDYKGCAVLVAYDKQSPDIAQGVDRASDDYLNQGAGDQGLMFGYACDETPELMPFPIYYAHRLVERQSLLRRDGRLPWLRPDAKSQVTVRYVDGKPHSVDTVVLSTQHSPDITQAQIREAVIEEIIKPVLPAEMLKETKYLVNPTGRFVIGGPQGDCGLTGRKIIVDTYGGASPHGGGAFSGKDPSKVDRSAAYAARYVAKNVVASGLARQCQVQVSYAIGVARPINVTVYTEGTGKIPDAKIAELVQEHFDLRPKGIVQMLDLLRPIYEKTAAYGHFGREEPEFSWEATDKAAALRAAAGL.

Histidine 16 is a binding site for ATP. Aspartate 18 lines the Mg(2+) pocket. Position 44 (glutamate 44) interacts with K(+). Positions 57 and 100 each coordinate L-methionine. The flexible loop stretch occupies residues glutamine 100–arginine 110. ATP is bound by residues aspartate 167–lysine 169, arginine 232–phenylalanine 233, aspartate 241, arginine 247–lysine 248, alanine 264, and lysine 268. Aspartate 241 serves as a coordination point for L-methionine. Lysine 272 contacts L-methionine.

The protein belongs to the AdoMet synthase family. Homotetramer; dimer of dimers. Mg(2+) serves as cofactor. Requires K(+) as cofactor.

It is found in the cytoplasm. It carries out the reaction L-methionine + ATP + H2O = S-adenosyl-L-methionine + phosphate + diphosphate. It participates in amino-acid biosynthesis; S-adenosyl-L-methionine biosynthesis; S-adenosyl-L-methionine from L-methionine: step 1/1. In terms of biological role, catalyzes the formation of S-adenosylmethionine (AdoMet) from methionine and ATP. The overall synthetic reaction is composed of two sequential steps, AdoMet formation and the subsequent tripolyphosphate hydrolysis which occurs prior to release of AdoMet from the enzyme. The sequence is that of S-adenosylmethionine synthase from Cupriavidus necator (strain ATCC 17699 / DSM 428 / KCTC 22496 / NCIMB 10442 / H16 / Stanier 337) (Ralstonia eutropha).